A 122-amino-acid chain; its full sequence is Small ribosomal subunit protein uS13 (122 aa).

The segment at 94–122 (KQLPVRGQRTHTNARTRKGKAKPIAGKKK) is disordered.

It belongs to the universal ribosomal protein uS13 family. In terms of assembly, part of the 30S ribosomal subunit. Forms a loose heterodimer with protein S19. Forms two bridges to the 50S subunit in the 70S ribosome.

Located at the top of the head of the 30S subunit, it contacts several helices of the 16S rRNA. In the 70S ribosome it contacts the 23S rRNA (bridge B1a) and protein L5 of the 50S subunit (bridge B1b), connecting the 2 subunits; these bridges are implicated in subunit movement. Contacts the tRNAs in the A and P-sites. The chain is Small ribosomal subunit protein uS13 from Methylorubrum extorquens (strain PA1) (Methylobacterium extorquens).